A 337-amino-acid chain; its full sequence is Nucleoid-associated protein PBPRA2585 (337 aa).

This sequence belongs to the YejK family.

It localises to the cytoplasm. The protein resides in the nucleoid. In Photobacterium profundum (strain SS9), this protein is Nucleoid-associated protein PBPRA2585.